A 349-amino-acid polypeptide reads, in one-letter code: Ureidoglycolate dehydrogenase (NAD(+)) (349 aa).

His-116 acts as the Proton acceptor in catalysis. Residues Ser-140, 174–176, Lys-224, and 306–308 each bind NAD(+); these read DMA and GQD.

The protein belongs to the LDH2/MDH2 oxidoreductase family. In terms of assembly, homodimer.

The protein localises to the cytoplasm. The enzyme catalyses (S)-ureidoglycolate + NAD(+) = N-carbamoyl-2-oxoglycine + NADH + H(+). Its pathway is nitrogen metabolism; (S)-allantoin degradation; oxalurate from (S)-ureidoglycolate: step 1/1. In terms of biological role, allD plays a pivotal role as a metabolic branch-point enzyme in nitrogen utilization via the assimilation of allantoin. It is able to utilize allantoin as a sole source of nitrogen under anaerobic conditions. Catalyzes the oxidation of ureidoglycolate to oxalurate. This Escherichia coli O157:H7 protein is Ureidoglycolate dehydrogenase (NAD(+)).